The following is a 466-amino-acid chain: Glutamate--tRNA ligase (466 aa).

The 'HIGH' region motif lies at 10–20 (PSPTGYLHIGG). A 'KMSKS' region motif is present at residues 237–241 (RLSKR). Lysine 240 is a binding site for ATP.

Belongs to the class-I aminoacyl-tRNA synthetase family. Glutamate--tRNA ligase type 1 subfamily. In terms of assembly, monomer.

It is found in the cytoplasm. It catalyses the reaction tRNA(Glu) + L-glutamate + ATP = L-glutamyl-tRNA(Glu) + AMP + diphosphate. Its function is as follows. Catalyzes the attachment of glutamate to tRNA(Glu) in a two-step reaction: glutamate is first activated by ATP to form Glu-AMP and then transferred to the acceptor end of tRNA(Glu). The polypeptide is Glutamate--tRNA ligase (Syntrophotalea carbinolica (strain DSM 2380 / NBRC 103641 / GraBd1) (Pelobacter carbinolicus)).